Consider the following 108-residue polypeptide: Small ribosomal subunit protein eS25w (108 aa).

Residues Met-1 to Lys-36 are disordered. Residues Lys-22–Gly-31 show a composition bias toward basic residues.

The protein belongs to the eukaryotic ribosomal protein eS25 family.

The sequence is that of Small ribosomal subunit protein eS25w (RPS25E) from Arabidopsis thaliana (Mouse-ear cress).